The following is a 331-amino-acid chain: D-lactate/D-glycerate dehydrogenase (331 aa).

NAD(+) is bound by residues 154–155, D174, 205–206, N211, 232–234, and D258; these read RI, VP, and FAR. R234 is an active-site residue. The active site involves E263. H295 acts as the Proton donor in catalysis.

This sequence belongs to the D-isomer specific 2-hydroxyacid dehydrogenase family. Homodimer.

The enzyme catalyses (R)-lactate + NAD(+) = pyruvate + NADH + H(+). The catalysed reaction is (R)-glycerate + NAD(+) = 3-hydroxypyruvate + NADH + H(+). Has both D-lactate and D-glycerate dehydrogenase activities. Equally active on pyruvate and hydroxypyruvate. In Pediococcus acidilactici, this protein is D-lactate/D-glycerate dehydrogenase.